Consider the following 1507-residue polypeptide: DDB1- and CUL4-associated factor 1 (1507 aa).

The tract at residues 141 to 500 (QPLRTYSTGL…STLEILNLED (360 aa)) is protein kinase-like. Phosphoserine is present on residues Ser-202 and Ser-255. The interval 242–288 (HLDSGHKTSSRVNSTTKPEDGGLKKNKSAKQGDRENFRKAKQKLGFS) is disordered. One can recognise a Chromo domain in the interval 562–593 (SYTHEQIVEMMEFLIEYGPAQLYWEPAEVFLK). Position 701 is an N6-acetyllysine (Lys-701). Position 828 is a phosphoserine (Ser-828). Residues 846 to 878 (PEKELLLLIRNHLISKGLGETATVLTKEADLPM) enclose the LisH domain. Phosphothreonine is present on Thr-888. 2 positions are modified to phosphoserine: Ser-895 and Ser-898. Positions 917 to 947 (AAVGASAPSAPTAHPQPRPPQGPLALPGPSY) are disordered. A phosphoserine mark is found at Ser-979 and Ser-1000. WD repeat units follow at residues 1091 to 1130 (EDES…EEAS), 1133 to 1174 (CHNS…DMKH), 1176 to 1213 (FTED…KLLT), 1215 to 1247 (FNPD…WDVR), and 1248 to 1290 (SAQA…LLHT). Positions 1091–1290 (EDESGFTCCA…DLRTFHLLHT (200 aa)) are WD repeat-like region. Short sequence motifs (DWD box) lie at residues 1242–1249 (VLWDVRSA) and 1278–1285 (EIWDLRTF). Ser-1328 is modified (phosphoserine). A disordered region spans residues 1393 to 1507 (RLAEDEDEEE…EDDIILSLNE (115 aa)). 2 stretches are compositionally biased toward acidic residues: residues 1396–1483 (EDED…EEVE) and 1490–1501 (DSSDNSDLEDDI). The segment at 1418-1507 (DDDTDDLDEL…EDDIILSLNE (90 aa)) is interaction with NF2.

This sequence belongs to the VPRBP/DCAF1 family. In terms of assembly, component of the DCX (DDB1-CUL4-X-box) E3 ubiquitin-protein ligase complex, named CUL4A-RBX1-DDB1-DCAF1/VPRBP complex. Interacts with DDB1; the interaction is direct. Also forms a ternary complex with DDA1 and DDB1. Interacts with NF2 (via FERM domain). Component of the EDVP complex, a E3 ligase complex containing DYRK2, EDD/UBR5, DDB1 and DCAF1. Interacts with DYRK2; the interaction is direct. Interacts with RAG1; the interaction is direct. Interacts with LLGL1 and LLGL2. Interacts with histone H3. Interacts with ESR1 and LATS1; probably recruited by LATS1 to promote ESR1 ubiquitination and ubiquitin-mediated proteasomal degradation. Directly interacts with TET1, TET2 and TET3 (via C-terminus). Interacts with CEP78; promoting DCAF1 localization to centrosomes. (Microbial infection) Interacts with HIV-1 virus Vpr protein; the interaction is direct. As to quaternary structure, (Microbial infection) Interacts with HIV-2 virus Vpx protein; the interaction is direct and the complex recruits SAMHD1 to promote its ubiquitin-dependent proteasomal degradation. In terms of assembly, (Microbial infection) Interacts (via C-terminus) with human cytomegalovirus protein UL35; this interaction induces the accumulation of cells in the G2 phase of the cell cycle. In terms of tissue distribution, ubiquitously expressed.

Its subcellular location is the cytoplasm. The protein localises to the nucleus. It is found in the cytoskeleton. The protein resides in the microtubule organizing center. It localises to the centrosome. It carries out the reaction L-seryl-[protein] + ATP = O-phospho-L-seryl-[protein] + ADP + H(+). The catalysed reaction is L-threonyl-[protein] + ATP = O-phospho-L-threonyl-[protein] + ADP + H(+). The protein operates within protein modification; protein ubiquitination. Acts both as a substrate recognition component of E3 ubiquitin-protein ligase complexes and as an atypical serine/threonine-protein kinase, playing key roles in various processes such as cell cycle, telomerase regulation and histone modification. Probable substrate-specific adapter of a DCX (DDB1-CUL4-X-box) E3 ubiquitin-protein ligase complex, named CUL4A-RBX1-DDB1-DCAF1/VPRBP complex, which mediates ubiquitination and proteasome-dependent degradation of proteins such as NF2. Involved in the turnover of methylated proteins: recognizes and binds methylated proteins via its chromo domain, leading to ubiquitination of target proteins by the RBX1-DDB1-DCAF1/VPRBP complex. The CUL4A-RBX1-DDB1-DCAF1/VPRBP complex is also involved in B-cell development: DCAF1 is recruited by RAG1 to ubiquitinate proteins, leading to limit error-prone repair during V(D)J recombination. Also part of the EDVP complex, an E3 ligase complex that mediates ubiquitination of proteins such as TERT, leading to TERT degradation and telomerase inhibition. The EDVP complex also mediates ubiquitination and degradation of CCP110. Also acts as an atypical serine/threonine-protein kinase that specifically mediates phosphorylation of 'Thr-120' of histone H2A (H2AT120ph) in a nucleosomal context, thereby repressing transcription. H2AT120ph is present in the regulatory region of many tumor suppresor genes, down-regulates their transcription and is present at high level in a number of tumors. Involved in JNK-mediated apoptosis during cell competition process via its interaction with LLGL1 and LLGL2. By acting on TET dioxygenses, essential for oocyte maintenance at the primordial follicle stage, hence essential for female fertility. Functionally, (Microbial infection) In case of infection by HIV-1 virus, it is recruited by HIV-1 Vpr in order to hijack the CUL4A-RBX1-DDB1-DCAF1/VPRBP function leading to arrest the cell cycle in G2 phase, and also to protect the viral protein from proteasomal degradation by another E3 ubiquitin ligase. The HIV-1 Vpr protein hijacks the CUL4A-RBX1-DDB1-DCAF1/VPRBP complex to promote ubiquitination and degradation of proteins such as TERT and ZIP/ZGPAT. In terms of biological role, (Microbial infection) In case of infection by HIV-2 virus, it is recruited by HIV-2 Vpx in order to hijack the CUL4A-RBX1-DDB1-DCAF1/VPRBP function leading to enhanced efficiency of macrophage infection and promotion of the replication of cognate primate lentiviruses in cells of monocyte/macrophage lineage. The polypeptide is DDB1- and CUL4-associated factor 1 (Homo sapiens (Human)).